The following is a 275-amino-acid chain: Chemotaxis protein methyltransferase Cher2 (275 aa).

The region spanning 1-275 (MSTGNLDFEQ…CSPGIIYQAK (275 aa)) is the CheR-type methyltransferase domain. Residues N73, T75, R79, E116, D145, 201-202 (NL), and 218-219 (RN) contribute to the S-adenosyl-L-methionine site.

Monomer.

The enzyme catalyses L-glutamyl-[protein] + S-adenosyl-L-methionine = [protein]-L-glutamate 5-O-methyl ester + S-adenosyl-L-homocysteine. Methylation of the membrane-bound methyl-accepting chemotaxis proteins (MCP) to form gamma-glutamyl methyl ester residues in MCP. Methylates the McpS chemotaxis receptor. This Pseudomonas putida (strain ATCC 47054 / DSM 6125 / CFBP 8728 / NCIMB 11950 / KT2440) protein is Chemotaxis protein methyltransferase Cher2 (cheR2).